A 414-amino-acid chain; its full sequence is MTQANLSETLFKPRFKHPETSTLVRRFSHGAQLPVQSALDGKTIPHWYRMINRLMWIWRGIDPREILDVQARIVMSDAERTDDDLYDTVIGYRGGNWIYEWATQAMVWQQKACAEEDPQLSGRHWLHAATLYNIAAYPHLKGDDLAEQAQALSNRAYEEAAQRLPGTMRQMEFTVPGGAPITGFLHMPKGDGPFPTVLMCGGLDAMQTDYYSLYERYFAPRGIAMLTIDMPSVGFSSKWKLTQDSSLLHQHVLKALPNVPWVDHTRVAAFGFRFGANVAVRLAYLESPRLKAVACLGPVVHTLLSDFKCQQQVPEMYLDVLASRLGMHDASDEALRVELNRYSLKVQGLLGRRCPTPMLSGYWKNDPFSPEEDSRLITSSSADGKLLEIPFNPVYRNFDKGLQEITDWIEKRLC.

Belongs to the FrsA family.

The catalysed reaction is a carboxylic ester + H2O = an alcohol + a carboxylate + H(+). Catalyzes the hydrolysis of esters. The sequence is that of Esterase FrsA from Escherichia coli O127:H6 (strain E2348/69 / EPEC).